The sequence spans 364 residues: 4-hydroxy-3-methylbut-2-en-1-yl diphosphate synthase (flavodoxin) (364 aa).

[4Fe-4S] cluster is bound by residues Cys268, Cys271, Cys303, and Glu310.

This sequence belongs to the IspG family. The cofactor is [4Fe-4S] cluster.

It catalyses the reaction (2E)-4-hydroxy-3-methylbut-2-enyl diphosphate + oxidized [flavodoxin] + H2O + 2 H(+) = 2-C-methyl-D-erythritol 2,4-cyclic diphosphate + reduced [flavodoxin]. It participates in isoprenoid biosynthesis; isopentenyl diphosphate biosynthesis via DXP pathway; isopentenyl diphosphate from 1-deoxy-D-xylulose 5-phosphate: step 5/6. Its function is as follows. Converts 2C-methyl-D-erythritol 2,4-cyclodiphosphate (ME-2,4cPP) into 1-hydroxy-2-methyl-2-(E)-butenyl 4-diphosphate. The chain is 4-hydroxy-3-methylbut-2-en-1-yl diphosphate synthase (flavodoxin) from Desulfotalea psychrophila (strain LSv54 / DSM 12343).